The primary structure comprises 322 residues: MKTSRRGRALLAVALNLLALLFATTAFLTTYWCQGTQRVPKPGCGQGGGANCPNSGANATANSTAAPVAASPAGAPYSWEAGDERFQLRRFHTGIWYSCEEELGGPGEKCRSFIDLAPASEKGVLWLSVVSEVLYILLLVVGFSLMCLELVHSSSVIDGLKLNAFAAVFTVLSGLLGMVAHMMYTQVFQVTVSLGPEDWRPHSWDYGWSFCLAWGSFTCCMAASVTTLNSYTKTVIEFRHKRKVFEQGYREEPTFIDPEAIKYFRERIEKGDVSEEEDFRLACRHERYPTRHQPHMGDSWPRSSAHEAAELNRQCWVLGHWV.

The Cytoplasmic portion of the chain corresponds to 1–8; it reads MKTSRRGR. The helical transmembrane segment at 9–29 threads the bilayer; sequence ALLAVALNLLALLFATTAFLT. The Extracellular portion of the chain corresponds to 30-122; sequence TYWCQGTQRV…FIDLAPASEK (93 aa). Residues 123-143 form a helical membrane-spanning segment; that stretch reads GVLWLSVVSEVLYILLLVVGF. The Cytoplasmic segment spans residues 144 to 163; the sequence is SLMCLELVHSSSVIDGLKLN. The chain crosses the membrane as a helical span at residues 164-184; the sequence is AFAAVFTVLSGLLGMVAHMMY. Over 185–207 the chain is Extracellular; it reads TQVFQVTVSLGPEDWRPHSWDYG. Residues 208–228 form a helical membrane-spanning segment; that stretch reads WSFCLAWGSFTCCMAASVTTL. At 229-322 the chain is on the cytoplasmic side; it reads NSYTKTVIEF…RQCWVLGHWV (94 aa). S274 is modified (phosphoserine).

The protein belongs to the GSG1 family. In terms of assembly, component of the inner core of AMPAR complexes. AMPAR complexes consist of an inner core made of 4 pore-forming GluA/GRIA proteins (GRIA1, GRIA2, GRIA3 and GRIA4) and 4 major auxiliary subunits arranged in a twofold symmetry. One of the two pairs of distinct binding sites is occupied either by CNIH2, CNIH3 or CACNG2, CACNG3. The other harbors CACNG2, CACNG3, CACNG4, CACNG8 or GSG1L. This inner core of AMPAR complexes is complemented by outer core constituents binding directly to the GluA/GRIA proteins at sites distinct from the interaction sites of the inner core constituents. Outer core constituents include at least PRRT1, PRRT2, CKAMP44/SHISA9, FRRS1L and NRN1. The proteins of the inner and outer core serve as a platform for other, more peripherally associated AMPAR constituents. Alone or in combination, these auxiliary subunits control the gating and pharmacology of the AMPAR complexes and profoundly impact their biogenesis and protein processing. Expressed in the brain, including hippocampus (at protein level).

Its subcellular location is the cell membrane. The protein resides in the synapse. Functionally, as a component of the inner core of AMPAR complexes, modifies AMPA receptor (AMPAR) gating. This chain is Germ cell-specific gene 1-like protein (Gsg1l), found in Mus musculus (Mouse).